The primary structure comprises 432 residues: MAVIESVYARQILDSRGNPTVQVVLDTEDGAQGLGLVPSGASTGEAEAWERRDGDKSVYGGKGVLNAVKAVNEVIAPKVIGMDAADQRALDDLMIELDGTPNKGKLGANAILGVSLAALYASAESAGLPLYRYIGGTNGHILPVPNMNIMNGGAHADFATDIQEYMISPYGFDTYSEALRAGVEVYHTLKNVLKKEGLNTGLGDEGGFAPKMKSNEDSLKYIMDAISAAGYEPGKQIGICLDVASSEFYNKETGKYRFDGEERDSAYMLDYYENLINEYPIVSIEDPFNEEGWEDWAAITARLGDRLQFVGDDLLVTNPARLQKAIDLGAANSLLVKLNQIGSVTETLDAIELATANGYTSMVSHRSGETPDTTISDLAVAKNTRQIKTGAPARGERVAKYNRLLEIEEELGSTAQYAGYSAFKACKKYLAK.

Position 163 (glutamine 163) interacts with (2R)-2-phosphoglycerate. The active-site Proton donor is the glutamate 205. The Mg(2+) site is built by aspartate 242, glutamate 285, and aspartate 312. (2R)-2-phosphoglycerate-binding residues include lysine 337, arginine 366, serine 367, and lysine 388. Lysine 337 (proton acceptor) is an active-site residue.

The protein belongs to the enolase family. Requires Mg(2+) as cofactor.

The protein localises to the cytoplasm. It localises to the secreted. Its subcellular location is the cell surface. The enzyme catalyses (2R)-2-phosphoglycerate = phosphoenolpyruvate + H2O. The protein operates within carbohydrate degradation; glycolysis; pyruvate from D-glyceraldehyde 3-phosphate: step 4/5. In terms of biological role, catalyzes the reversible conversion of 2-phosphoglycerate (2-PG) into phosphoenolpyruvate (PEP). It is essential for the degradation of carbohydrates via glycolysis. The sequence is that of Enolase from Bifidobacterium longum (strain DJO10A).